The following is an 841-amino-acid chain: Potassium transport protein 1 (841 aa).

2 helical membrane passes run 24-44 (YIYIISLTIIASILLFTGGTT) and 80-100 (ILYGFTAITVPIWMHGSISFI). 2 N-linked (GlcNAc...) asparagine glycosylation sites follow: Asn-116 and Asn-164. The interval 173 to 192 (STNNPYFPDNPPSPKADISK) is disordered. N-linked (GlcNAc...) asparagine glycosylation is found at Asn-215 and Asn-401. The next 7 membrane-spanning stretches (helical) occupy residues 469–489 (MVTLYFIIFNIAAFVTFIVFA), 507–527 (GWWALFSSASSFNDLGFSLIP), 537–557 (IFLLLISSLFIIAGNTGFPCF), 600–620 (WVLFFVLLLLNVIDLVLFMVL), 662–682 (AVLVSYMVMMYISVYPVAINM), 715–735 (LSYDLWYIFLGLFIICICEGG), and 747–767 (IFTVLFEVVSAYGTVGLSTGL). The N-linked (GlcNAc...) asparagine glycan is linked to Asn-771.

The protein belongs to the TrkH potassium transport family.

Its subcellular location is the cell membrane. Functionally, together with TRK2, defines the major, high-affinity potassium influx transport system. Involved in maintenance of the proper sodium/potassium ratio in the cell and in regulating the plasma membrane potential. The chain is Potassium transport protein 1 (trk1) from Schizosaccharomyces pombe (strain 972 / ATCC 24843) (Fission yeast).